Consider the following 507-residue polypeptide: Probable aldehyde dehydrogenase (507 aa).

An NAD(+)-binding site is contributed by 219–225 (GFGAEAG). Active-site residues include E263 and C302.

Belongs to the aldehyde dehydrogenase family.

The catalysed reaction is an aldehyde + NAD(+) + H2O = a carboxylate + NADH + 2 H(+). The protein is Probable aldehyde dehydrogenase of Mycobacterium bovis (strain ATCC BAA-935 / AF2122/97).